Here is a 317-residue protein sequence, read N- to C-terminus: tRNA pseudouridine synthase B (317 aa).

Catalysis depends on D47, which acts as the Nucleophile.

Belongs to the pseudouridine synthase TruB family. Type 1 subfamily.

It catalyses the reaction uridine(55) in tRNA = pseudouridine(55) in tRNA. Responsible for synthesis of pseudouridine from uracil-55 in the psi GC loop of transfer RNAs. This is tRNA pseudouridine synthase B from Shewanella sp. (strain ANA-3).